The primary structure comprises 504 residues: Plasma protease C1 inhibitor (504 aa).

The first 22 residues, 1–22, serve as a signal peptide directing secretion; it reads MASKLTPLTLLLLLLAGDRAFS. Residues 23–75 form a disordered region; the sequence is DSEVTSHSSQDPLVVQEGSRDSVPERDGSRSPIEHTGQSSTWPTTSGSTKISN. A compositionally biased stretch (polar residues) spans 24-33; the sequence is SEVTSHSSQD. Residues 40 to 55 are compositionally biased toward basic and acidic residues; it reads GSRDSVPERDGSRSPI. Positions 58–75 are enriched in polar residues; that stretch reads TGQSSTWPTTSGSTKISN. Residues Asn75, Asn83, Asn107, Asn243, and Asn356 are each glycosylated (N-linked (GlcNAc...) asparagine). A disordered region spans residues 94–132; the sequence is AQLPEDSPSQSPVNSSSPPSTASAPPTQAPTEPLCPEPL. Low complexity predominate over residues 100–125; that stretch reads SPSQSPVNSSSPPSTASAPPTQAPTE.

Belongs to the serpin family. In terms of assembly, interacts with MASP1.

The protein localises to the secreted. Its function is as follows. Serine protease inhibitor, which acrs as a regulator of the classical complement pathway. Forms a proteolytically inactive stoichiometric complex with the C1r or C1s proteases. May also regulate blood coagulation, fibrinolysis and the generation of kinins. Very efficient inhibitor of FXIIa. Inhibits chymotrypsin and kallikrein. This is Plasma protease C1 inhibitor (Serping1) from Rattus norvegicus (Rat).